The primary structure comprises 692 residues: MAERKTPLHKVRNIGIAAHIDAGKTTTSERILFFTGMSHKIGEVHDGAATMDWMEQEKERGITITSAATTAFWKGYQVNLIDTPGHVDFTIEVERSMRVLDGAVAVFCSVGGVQPQSETVWRQANKYHVPRIVFVNKMDRIGANFFRVEEQIRERLKANPVPIQIPIGAEDNFKGVVDLVRMKAYVWNDEKKPTDYVEEEIPAEVKDKAEEYRAKLIEAVSETDDSLMEKFFAGEELTEEEIKKGIKAGCLRMTITPMLCGTAFKNKGIQPLLDAVVDYLPAPDEIAAINGVYEDGTEVTVESTDDGEFAALAFKIMTDPFVGQLTFIRVYRGSLESGSYAYNTVQDCKERIGRLLKMHSNKREEITELFAGEIGAVVGLKNTLTGDTLASEKDKVILERMDFPEPVISVAVEPKTKADQEKMAIALQKLAQEDPSFRVSTDEESGQTIISGMGELHLEIIVDRMLREFKVDAEVGQPQVAYRETIRKAVEQEYKYAKQSGGRGQYGHVFLRIEPLPAASGFEFVNDIKGGVVPKEYIPAVEKGCKEALQSGVLAGYPVEDVKVTLFDGSYHEVDSSEMAFKLAASMGFKEGARKAGAVILEPMMKVEVETPEEYMGDVIGDLNKRRGQVNSMDDRNGVKIIAAYCPLAQMFGYSTDLRSMTQGRATYSMEFDHYEEVPKNVSEEIIKKRNG.

The tr-type G domain occupies 9–284; sequence HKVRNIGIAA…AVVDYLPAPD (276 aa). GTP-binding positions include 18-25, 82-86, and 136-139; these read AHIDAGKT, DTPGH, and NKMD.

The protein belongs to the TRAFAC class translation factor GTPase superfamily. Classic translation factor GTPase family. EF-G/EF-2 subfamily.

The protein resides in the cytoplasm. Catalyzes the GTP-dependent ribosomal translocation step during translation elongation. During this step, the ribosome changes from the pre-translocational (PRE) to the post-translocational (POST) state as the newly formed A-site-bound peptidyl-tRNA and P-site-bound deacylated tRNA move to the P and E sites, respectively. Catalyzes the coordinated movement of the two tRNA molecules, the mRNA and conformational changes in the ribosome. This Campylobacter concisus (strain 13826) protein is Elongation factor G.